The primary structure comprises 173 residues: MPAPQKDGPRANRDIRGVRDVQLIDQDGQNRGVVPFFDALAMAEEVGLDLVEIAPNSVPPVCKFLDYGRFRFNEQKKQNEARKRQKTVEVKEIKLRPGIDKHDYDVKMKAVQRFFEEGDKVKVTLRFRGREIAHQDIGLRLLERVKQETQEVAKVESEPMLEGRQMIMILAPR.

Belongs to the IF-3 family. In terms of assembly, monomer.

Its subcellular location is the cytoplasm. In terms of biological role, IF-3 binds to the 30S ribosomal subunit and shifts the equilibrium between 70S ribosomes and their 50S and 30S subunits in favor of the free subunits, thus enhancing the availability of 30S subunits on which protein synthesis initiation begins. The polypeptide is Translation initiation factor IF-3 (Methylorubrum populi (strain ATCC BAA-705 / NCIMB 13946 / BJ001) (Methylobacterium populi)).